Consider the following 489-residue polypeptide: N-succinylglutamate 5-semialdehyde dehydrogenase (489 aa).

Residue 223-228 (GSSRTG) participates in NAD(+) binding. Residues E246 and C280 contribute to the active site.

The protein belongs to the aldehyde dehydrogenase family. AstD subfamily.

The catalysed reaction is N-succinyl-L-glutamate 5-semialdehyde + NAD(+) + H2O = N-succinyl-L-glutamate + NADH + 2 H(+). It functions in the pathway amino-acid degradation; L-arginine degradation via AST pathway; L-glutamate and succinate from L-arginine: step 4/5. Catalyzes the NAD-dependent reduction of succinylglutamate semialdehyde into succinylglutamate. This is N-succinylglutamate 5-semialdehyde dehydrogenase from Aeromonas salmonicida (strain A449).